The primary structure comprises 325 residues: Hydroxymethylglutaryl-CoA lyase, mitochondrial (325 aa).

Residues 1–27 (MAAMTKALPRRLVGLASLRAVSTSSMD) constitute a mitochondrion transit peptide. The 268-residue stretch at 33-300 (VKIVEVGPRD…HTGVNLQKLL (268 aa)) folds into the Pyruvate carboxyltransferase domain. Arg-41 is a binding site for substrate. Asp-42 is a binding site for a divalent metal cation. N6-acetyllysine; alternate is present on Lys-48. Lys-48 bears the N6-succinyllysine; alternate mark. Lys-111 is modified (N6-acetyllysine). An N6-acetyllysine; alternate mark is found at Lys-137 and Lys-179. Lys-137 and Lys-179 each carry N6-succinyllysine; alternate. 2 residues coordinate a divalent metal cation: His-233 and His-235. Residue Cys-266 is part of the active site. Asn-275 is an a divalent metal cation binding site. The Microbody targeting signal signature appears at 323 to 325 (CKL). At Lys-324 the chain carries N6-acetyllysine.

This sequence belongs to the HMG-CoA lyase family. Homodimer; disulfide-linked. Can also form homotetramers.

The protein localises to the mitochondrion matrix. Its subcellular location is the peroxisome. It carries out the reaction (3S)-3-hydroxy-3-methylglutaryl-CoA = acetoacetate + acetyl-CoA. The protein operates within metabolic intermediate metabolism; (S)-3-hydroxy-3-methylglutaryl-CoA degradation; acetoacetate from (S)-3-hydroxy-3-methylglutaryl-CoA: step 1/1. Mitochondrial 3-hydroxy-3-methylglutaryl-CoA lyase that catalyzes a cation-dependent cleavage of (S)-3-hydroxy-3-methylglutaryl-CoA into acetyl-CoA and acetoacetate, a key step in ketogenesis. Terminal step in leucine catabolism. Ketone bodies (beta-hydroxybutyrate, acetoacetate and acetone) are essential as an alternative source of energy to glucose, as lipid precursors and as regulators of metabolism. This is Hydroxymethylglutaryl-CoA lyase, mitochondrial (HMGCL) from Macaca fascicularis (Crab-eating macaque).